Here is a 302-residue protein sequence, read N- to C-terminus: Deoxyhypusine hydroxylase-B (302 aa).

5 HEAT-like PBS-type repeats span residues 49 to 75 (LAHE…VLKD), 82 to 108 (VRHE…SLAV), 171 to 200 (MYER…LGVK), 204 to 230 (LRHE…VLKN), and 237 to 263 (VRHE…FAKD). Fe cation contacts are provided by histidine 51, glutamate 52, histidine 84, and glutamate 85. Fe cation-binding residues include histidine 206, glutamate 207, histidine 239, and glutamate 240.

This sequence belongs to the deoxyhypusine hydroxylase family. Fe(2+) is required as a cofactor.

The enzyme catalyses [eIF5A protein]-deoxyhypusine + AH2 + O2 = [eIF5A protein]-hypusine + A + H2O. It functions in the pathway protein modification; eIF5A hypusination. In terms of biological role, catalyzes the hydroxylation of the N(6)-(4-aminobutyl)-L-lysine intermediate to form hypusine, an essential post-translational modification only found in mature eIF-5A factor. In Oryza sativa subsp. japonica (Rice), this protein is Deoxyhypusine hydroxylase-B.